Here is a 64-residue protein sequence, read N- to C-terminus: Conotoxin VnMLCL-033 (64 aa).

The N-terminal stretch at 1–19 (MLCLPVFIILLLLASPAAP) is a signal peptide. The propeptide occupies 20-43 (NPLQTRIQSNLIRAGPEDANIKTD). Ile63 is modified (isoleucine amide).

This sequence belongs to the conotoxin T superfamily. As to expression, expressed by the venom duct.

It is found in the secreted. The chain is Conotoxin VnMLCL-033 from Conus ventricosus (Mediterranean cone).